The following is a 1832-amino-acid chain: Zinc finger protein 646 (1832 aa).

8 C2H2-type zinc fingers span residues 8 to 31 (LSCS…ELLH), 48 to 70 (YRCQ…RRTH), 75 to 97 (FPCT…MRTH), 239 to 261 (YKCS…RQSH), 266 to 288 (YPCA…SRLH), 294 to 316 (YHCP…QQSH), 374 to 396 (FRCG…RKSH), and 401 to 424 (YPCS…RAHH). Positions 26 to 47 (HRELLHPSPNQDSEEADSIPRP) are disordered. The segment covering 94–108 (MRTHAPEGRRRHRPP) has biased composition (basic residues). The interval 94-200 (MRTHAPEGRR…TNSARAPPLP (107 aa)) is disordered. Basic and acidic residues predominate over residues 313–329 (QQSHEGERQEPRWEEKG). A disordered region spans residues 313-346 (QQSHEGERQEPRWEEKGMPTTNGHTDESSQDQLP). Residue K451 forms a Glycyl lysine isopeptide (Lys-Gly) (interchain with G-Cter in SUMO2) linkage. C2H2-type zinc fingers lie at residues 465 to 487 (YKCS…RHSH) and 492 to 514 (YQCS…VRVH). Glycyl lysine isopeptide (Lys-Gly) (interchain with G-Cter in SUMO2) cross-links involve residues K534 and K557. A C2H2-type 11 zinc finger spans residues 575 to 597 (HICSICGLLFEDAESLERHGLTH). S612 is modified (phosphoserine). C2H2-type zinc fingers lie at residues 617-639 (FACR…RQTH) and 644-666 (FSCG…LRRH). The interval 660–810 (KNHLRRHSRR…QPNSSSHSAN (151 aa)) is disordered. Over residues 661–678 (NHLRRHSRRRSRRHRKRA) the composition is skewed to basic residues. Residue K688 forms a Glycyl lysine isopeptide (Lys-Gly) (interchain with G-Cter in SUMO2) linkage. Residues 735–767 (EGDKCGLERDETHFQGDKESGGTGEGLERKDAS) show a composition bias toward basic and acidic residues. The segment covering 798–810 (ATGQPNSSSHSAN) has biased composition (polar residues). C2H2-type zinc fingers lie at residues 821–843 (HTCS…RPCH), 848–870 (YQCS…FQNH), and 881–904 (FLCC…RQAH). The disordered stretch occupies residues 901 to 931 (RQAHSSSGMTEGSEEEGEEEGVAEAAPARSP). Residues 912–922 (GSEEEGEEEGV) show a composition bias toward acidic residues. The C2H2-type 17; degenerate zinc-finger motif lies at 958–980 (HICGCCGQTYDDLGSLERHHQSQ). 2 C2H2-type zinc fingers span residues 1052-1074 (FRCN…RKIH) and 1079-1101 (FLCP…LRNH). The tract at residues 1103–1148 (RCKGSEPQVGPIPEAAGSSELQVGPIPEGGSNKPQHMAEEGPGQAE) is disordered. Residues K1157, K1168, and K1178 each participate in a glycyl lysine isopeptide (Lys-Gly) (interchain with G-Cter in SUMO2) cross-link. 6 consecutive C2H2-type zinc fingers follow at residues 1203-1225 (FSCE…RQSH), 1230-1252 (FGCQ…RRIH), 1258-1280 (FRCS…QRVH), 1299-1321 (FRCG…RRSH), 1326-1348 (YSCP…QRLH), and 1364-1386 (VRCA…LREH). The interval 1274-1294 (ASHQRVHMERRGGGGTRKATR) is disordered. 2 disordered regions span residues 1377 to 1481 (GSLE…WVPQ) and 1509 to 1529 (TLSH…QPGS). Residues 1378–1393 (SLERHLREHEETEREP) are compositionally biased toward basic and acidic residues. The span at 1406–1417 (SEANLTGSQGLE) shows a compositional bias: polar residues. The span at 1427-1438 (PHLEDGVPRPGE) shows a compositional bias: basic and acidic residues. Positions 1460 to 1475 (GKAGGWPVGGGLGNHS) are enriched in gly residues. 6 consecutive C2H2-type zinc fingers follow at residues 1557 to 1579 (HYCL…SHNH), 1585 to 1607 (FACP…LQAH), 1677 to 1699 (FRCT…QKAH), 1704 to 1726 (YPCS…SRTH), 1732 to 1754 (HCCS…GRVH), and 1761 to 1783 (FTCP…QQQH). A disordered region spans residues 1606–1672 (AHARGHSQVP…QAVTSMAAED (67 aa)). The segment at 1781-1832 (QQHQEEWTVAGSGAPVAPVTGRGDLPLPPPPTPTTPLLDPSPQWPADLSFSL) is disordered.

The protein belongs to the krueppel C2H2-type zinc-finger protein family.

The protein resides in the nucleus. Its function is as follows. May be involved in transcriptional regulation. The protein is Zinc finger protein 646 of Homo sapiens (Human).